The sequence spans 360 residues: Phospho-N-acetylmuramoyl-pentapeptide-transferase (360 aa).

10 helical membrane passes run 27 to 47 (GALITSALIVFIFGPTIINSL), 71 to 91 (TPTMGGLMILSGIIGSSLLWA), 93 to 113 (LSSIYVWVVLLVTLGFGSIGF), 134 to 154 (LGLEFIIAGIAAWVIMHNGQA), 168 to 188 (FIINLGWFFIPFSCFVIVGAG), 199 to 219 (GLAIVPIMIAAASFGVIAYLS), 239 to 259 (LAVVLGAVIGAGLGFLWFNAP), 262 to 282 (AIFMGDTGSLAMGGLIGTVAV), 288 to 308 (IVLVIVGGLFVVEILSVIIQV), and 337 to 357 (QVVIRFWIIAVILALVGLSTL).

This sequence belongs to the glycosyltransferase 4 family. MraY subfamily. Requires Mg(2+) as cofactor.

It is found in the cell inner membrane. The catalysed reaction is UDP-N-acetyl-alpha-D-muramoyl-L-alanyl-gamma-D-glutamyl-meso-2,6-diaminopimeloyl-D-alanyl-D-alanine + di-trans,octa-cis-undecaprenyl phosphate = di-trans,octa-cis-undecaprenyl diphospho-N-acetyl-alpha-D-muramoyl-L-alanyl-D-glutamyl-meso-2,6-diaminopimeloyl-D-alanyl-D-alanine + UMP. It participates in cell wall biogenesis; peptidoglycan biosynthesis. Catalyzes the initial step of the lipid cycle reactions in the biosynthesis of the cell wall peptidoglycan: transfers peptidoglycan precursor phospho-MurNAc-pentapeptide from UDP-MurNAc-pentapeptide onto the lipid carrier undecaprenyl phosphate, yielding undecaprenyl-pyrophosphoryl-MurNAc-pentapeptide, known as lipid I. The protein is Phospho-N-acetylmuramoyl-pentapeptide-transferase of Mesorhizobium japonicum (strain LMG 29417 / CECT 9101 / MAFF 303099) (Mesorhizobium loti (strain MAFF 303099)).